A 317-amino-acid chain; its full sequence is Glutamyl-tRNA reductase-binding protein, chloroplastic (317 aa).

A chloroplast-targeting transit peptide spans 1–42 (MQLQTQSFALNLLPSPNFAKPIERREFISLKRDPSRPISLRC).

Interacts with HEMA1 and forms a heterotetramer of two GLUTRBP and two HEMA1 subunits.

Its subcellular location is the plastid. It localises to the chloroplast stroma. In terms of biological role, involved in the regulation of glutamyl-tRNA reductase (GluTR) which is important for the synthesis and distribution of 5-aminolevulinate, a precursor in heme and chlorophyll biosynthesis. Stimulates GluTR activity and regulates glutamate-1-semialdehyde release. May play a role in heme metabolism. Necessary for efficient photosynthetic electron transport in chloroplasts. The sequence is that of Glutamyl-tRNA reductase-binding protein, chloroplastic from Arabidopsis thaliana (Mouse-ear cress).